Reading from the N-terminus, the 70-residue chain is Waprin-Thr1 (70 aa).

The N-terminal stretch at 1–19 is a signal peptide; it reads MKARLLLLSVVILVGMVSA. Residues 20–70 form the WAP domain; it reads ENEKAGSCPDVNQPIPPLGLCRNMCESDSGCPNNEKCCKNGCGFMTCSRPR. 4 cysteine pairs are disulfide-bonded: Cys-27/Cys-57, Cys-40/Cys-61, Cys-44/Cys-56, and Cys-50/Cys-66.

Belongs to the venom waprin family. In terms of tissue distribution, expressed by the venom gland.

It is found in the secreted. Its function is as follows. Damages membranes of susceptible bacteria. Has no hemolytic activity. Not toxic to mice. Does not inhibit the proteinases elastase and cathepsin G. In Thrasops jacksonii (Jackson's black tree snake), this protein is Waprin-Thr1.